Consider the following 703-residue polypeptide: DnaJ homolog subfamily C member 14 (703 aa).

Disordered stretches follow at residues 1 to 150 (MAQK…DGSS) and 164 to 229 (EDEE…RKRS). Low complexity predominate over residues 17–28 (SGGSSLITSGSS). Residues 75–84 (HGPPRGPGPP) show a composition bias toward pro residues. Acidic residues-rich tracts occupy residues 89–102 (YPDESETCSEESGV) and 164–176 (EDEELEEEYDDEE). Positions 193–202 (PPSRRQRHRF) are enriched in basic residues. The span at 203–218 (LTKEDVRDSGRRDPKA) shows a compositional bias: basic and acidic residues. Residues 219–228 (PGRHRLARKR) are compositionally biased toward basic residues. Helical transmembrane passes span 254–274 (WWLIELLVLVGEYVETCGYLI), 305–325 (VMFQFLSQSFFSVAGLFIRLL), and 327–347 (VVGAFLLLALALFLGCLQLGW). Residues 444 to 508 (NPFHVLGVEA…ERRKEYEMKR (65 aa)) form the J domain. Disordered stretches follow at residues 622–643 (FGSRVPGTSGRQRATPESPPAD) and 659–703 (MSNG…PFQR). Polar residues predominate over residues 673–684 (GTTSTSRPNSSV). Over residues 691–703 (PKRRKKVRRPFQR) the composition is skewed to basic residues.

As to quaternary structure, interacts with the FxxxFxxxF motif of DRD1 via its C-terminal domain. In terms of tissue distribution, detected in heart, brain, lung, liver, skeletal muscle, kidney and testis.

The protein localises to the endoplasmic reticulum membrane. Functionally, regulates the export of target proteins, such as DRD1, from the endoplasmic reticulum to the cell surface. The sequence is that of DnaJ homolog subfamily C member 14 (Dnajc14) from Rattus norvegicus (Rat).